Reading from the N-terminus, the 568-residue chain is Delta 8-(E)-sphingolipid desaturase (568 aa).

The Cytochrome b5 heme-binding domain occupies 2-77 (DNIISRGEIE…FRKWRIGRID (76 aa)). His37 and His60 together coordinate heme. The next 2 membrane-spanning stretches (helical) occupy residues 241–261 (FWSAFSMGCAWQQLVFIAHDA) and 272–292 (LDNIFGMIIASWVGGLSLGWW). The short motif at 259-263 (HDAGH) is the Histidine box-1 element. The Histidine box-2 motif lies at 296–300 (HNVHH). 3 helical membrane passes run 352–377 (YLYYPMLAFGRFNLYRLSWMHVLLGL), 389–409 (YFELCGLIFFNYWFFYLLVGC), and 421–441 (IMVSHITTMLVHVQITLSHFA). The short motif at 480–484 (QVVHH) is the Histidine box-3 element. The span at 549 to 560 (ATGEREADEKTY) shows a compositional bias: basic and acidic residues. The interval 549-568 (ATGEREADEKTYRTKSIKNA) is disordered.

It belongs to the fatty acid desaturase type 1 family.

The protein localises to the membrane. It carries out the reaction an N-acylsphing-4-enine + 2 Fe(II)-[cytochrome b5] + O2 + 2 H(+) = a (4E,8E)-4-sphinga-4,8-dienine ceramide + 2 Fe(III)-[cytochrome b5] + 2 H2O. It participates in lipid metabolism; sphingolipid metabolism. Its function is as follows. Delta(8)-fatty-acid desaturase which introduces a double bond at the 8-position in the long-chain base (LCB) of ceramides. Required for the formation of the di-unsaturated sphingoid base (E,E)-sphinga-4,8-dienine during glucosylceramide (GluCer) biosynthesis. The polypeptide is Delta 8-(E)-sphingolipid desaturase (Lachancea kluyveri (strain ATCC 58438 / CBS 3082 / BCRC 21498 / NBRC 1685 / JCM 7257 / NCYC 543 / NRRL Y-12651) (Yeast)).